The primary structure comprises 675 residues: Putative exonuclease GOR (675 aa).

The segment covering 66 to 79 has biased composition (basic and acidic residues); that stretch reads VAKEAAPEASRHLG. 2 disordered regions span residues 66–90 and 225–263; these read VAKE…APEG and AKRT…TATT. The segment at 358–483 is GOR1-125 epitope; the sequence is MPGLSRAALY…VRDGRKESLD (126 aa).

The protein belongs to the REXO1/REXO3 family.

It is found in the cytoplasm. The protein resides in the nucleus. The protein is Putative exonuclease GOR (REXO1L1P) of Homo sapiens (Human).